We begin with the raw amino-acid sequence, 447 residues long: Phosphoglucosamine mutase (447 aa).

Ser101 functions as the Phosphoserine intermediate in the catalytic mechanism. Ser101, Asp242, Asp244, and Asp246 together coordinate Mg(2+). At Ser101 the chain carries Phosphoserine.

The protein belongs to the phosphohexose mutase family. Requires Mg(2+) as cofactor. Activated by phosphorylation.

It carries out the reaction alpha-D-glucosamine 1-phosphate = D-glucosamine 6-phosphate. Catalyzes the conversion of glucosamine-6-phosphate to glucosamine-1-phosphate. This is Phosphoglucosamine mutase from Xanthobacter autotrophicus (strain ATCC BAA-1158 / Py2).